Consider the following 509-residue polypeptide: Probable xyloglucan galactosyltransferase GT12 (509 aa).

Topologically, residues Met-1 to Lys-3 are cytoplasmic. Residues Pro-4 to Phe-24 traverse the membrane as a helical; Signal-anchor for type II membrane protein segment. The Lumenal portion of the chain corresponds to Gln-25–Ala-509. 8 N-linked (GlcNAc...) asparagine glycosylation sites follow: Asn-27, Asn-59, Asn-65, Asn-169, Asn-170, Asn-195, Asn-257, and Asn-416.

The protein belongs to the glycosyltransferase 47 family. As to expression, expressed in pollen grains.

It is found in the golgi apparatus membrane. Its function is as follows. Functions in xyloglucan synthesis by adding side chains to the xylosylated glucan backbone. Involved in the galactosylation of hemicellulose xyloglucan. The chain is Probable xyloglucan galactosyltransferase GT12 from Arabidopsis thaliana (Mouse-ear cress).